A 343-amino-acid chain; its full sequence is Geranylgeranyl pyrophosphate synthase (343 aa).

Residues 1–12 (MAYTVEPREHSK) are compositionally biased toward basic and acidic residues. Residues 1-26 (MAYTVEPREHSKNTTLPTVAMPPSPP) form a disordered region. Positions 69, 72, and 101 each coordinate isopentenyl diphosphate. Residues Asp-108 and Asp-112 each contribute to the Mg(2+) site. Arg-117 is a dimethylallyl diphosphate binding site. Residue Arg-118 participates in isopentenyl diphosphate binding. 2 residues coordinate dimethylallyl diphosphate: Thr-196 and Gln-229. Asp-232 is a Mg(2+) binding site. Residues Asn-236, Lys-246, and Lys-256 each coordinate dimethylallyl diphosphate.

This sequence belongs to the FPP/GGPP synthase family. Requires Mg(2+) as cofactor.

The enzyme catalyses isopentenyl diphosphate + dimethylallyl diphosphate = (2E)-geranyl diphosphate + diphosphate. It catalyses the reaction isopentenyl diphosphate + (2E)-geranyl diphosphate = (2E,6E)-farnesyl diphosphate + diphosphate. It carries out the reaction isopentenyl diphosphate + (2E,6E)-farnesyl diphosphate = (2E,6E,10E)-geranylgeranyl diphosphate + diphosphate. Its pathway is mycotoxin biosynthesis. In terms of biological role, geranylgeranyl pyrophosphate synthase; part of the gene cluster that mediates the biosynthesis of aphidicolin, a specific inhibitor of eukaryotic DNA synthesis and DNA polymerase alpha. The geranylgeranyl pyrophosphate synthase GGS is required for supplying a sufficient amount of geranylgeranyl diphosphate (GGDP), the general precursor of diterpenes. The diterpene synthase ACS then catalyzes the conversion of geranylgeranyl diphosphate to aphidicolan-16-beta-ol via the intermediate syn-copalyldiphosphate (syn-CDP). In addition to aphidicolan-16-beta-ol, the enzyme also produces low levels of amphidicol-15-ene and amphidicol-16-ene. The cytochrome P450 monooxygenase P450-2 then catalyzes the two-step hydroxylation from aphidicolan-16-beta-ol to 3-deoxyaphidicolin via a 17,3-deoxyaphidicolin intermediate. Finally, the cytochrome P450 monooxygenase P450-1 converts 3-deoxyaphidicolin to aphidicolin. The polypeptide is Geranylgeranyl pyrophosphate synthase (GGS) (Neocamarosporium betae (Beet black rot fungus)).